The sequence spans 190 residues: Small ribosomal subunit protein uS5 (190 aa).

Positions 22 to 85 (FVDKLVHINR…DSAKRNLTRV (64 aa)) constitute an S5 DRBM domain.

This sequence belongs to the universal ribosomal protein uS5 family. As to quaternary structure, part of the 30S ribosomal subunit. Contacts proteins S4 and S8.

Functionally, with S4 and S12 plays an important role in translational accuracy. Located at the back of the 30S subunit body where it stabilizes the conformation of the head with respect to the body. The protein is Small ribosomal subunit protein uS5 of Bradyrhizobium sp. (strain BTAi1 / ATCC BAA-1182).